Reading from the N-terminus, the 583-residue chain is uncharacterized protein (583 aa).

Residue 24–140 (ILADIDDEQL…SAMLRAMARM (117 aa)) participates in a nucleoside 3',5'-cyclic phosphate binding. Residues 309 to 469 (LVMAGGGARG…LNNLPANVMC (161 aa)) enclose the PNPLA domain. A GXGXXG motif is present at residues 313–318 (GGGARG). The GXSXG signature appears at 340-344 (GTSSG). The Nucleophile role is filled by Ser-342. The active-site Proton acceptor is Asp-456. The DGA/G motif lies at 456-458 (DGG).

This sequence belongs to the NTE family.

This is an uncharacterized protein from Mycobacterium tuberculosis (strain CDC 1551 / Oshkosh).